The primary structure comprises 232 residues: Phosphatidylserine decarboxylase proenzyme (232 aa).

Ser190 functions as the Schiff-base intermediate with substrate; via pyruvic acid in the catalytic mechanism. Residue Ser190 is modified to Pyruvic acid (Ser); by autocatalysis.

Belongs to the phosphatidylserine decarboxylase family. PSD-A subfamily. Heterodimer of a large membrane-associated beta subunit and a small pyruvoyl-containing alpha subunit. Requires pyruvate as cofactor. Is synthesized initially as an inactive proenzyme. Formation of the active enzyme involves a self-maturation process in which the active site pyruvoyl group is generated from an internal serine residue via an autocatalytic post-translational modification. Two non-identical subunits are generated from the proenzyme in this reaction, and the pyruvate is formed at the N-terminus of the alpha chain, which is derived from the carboxyl end of the proenzyme. The post-translation cleavage follows an unusual pathway, termed non-hydrolytic serinolysis, in which the side chain hydroxyl group of the serine supplies its oxygen atom to form the C-terminus of the beta chain, while the remainder of the serine residue undergoes an oxidative deamination to produce ammonia and the pyruvoyl prosthetic group on the alpha chain.

The protein resides in the cell membrane. The enzyme catalyses a 1,2-diacyl-sn-glycero-3-phospho-L-serine + H(+) = a 1,2-diacyl-sn-glycero-3-phosphoethanolamine + CO2. The protein operates within phospholipid metabolism; phosphatidylethanolamine biosynthesis; phosphatidylethanolamine from CDP-diacylglycerol: step 2/2. Catalyzes the formation of phosphatidylethanolamine (PtdEtn) from phosphatidylserine (PtdSer). The sequence is that of Phosphatidylserine decarboxylase proenzyme from Allorhizobium ampelinum (strain ATCC BAA-846 / DSM 112012 / S4) (Agrobacterium vitis (strain S4)).